A 102-amino-acid polypeptide reads, in one-letter code: MYAIIETGGKQIKVEEGQEIYIEKIDAQEGETVTFDKVLFVGGETVKIGNPTVEGATVTAKVQKHGRQKKIIVFKYKAKKNYRRKQGHRQPYTKVVIEKINA.

This sequence belongs to the bacterial ribosomal protein bL21 family. Part of the 50S ribosomal subunit. Contacts protein L20.

Functionally, this protein binds to 23S rRNA in the presence of protein L20. The protein is Large ribosomal subunit protein bL21 of Geobacillus sp. (strain WCH70).